Reading from the N-terminus, the 535-residue chain is BAR/IMD domain-containing adapter protein 2 (535 aa).

Residues 1 to 250 (MSLSRSEEMH…VQLMQQMANS (250 aa)) enclose the IMD domain. Residues 88-153 (NQLEETLKSF…LRKKSQGSKN (66 aa)) adopt a coiled-coil conformation. A phosphoserine mark is found at Ser262, Ser324, Ser326, and Ser337. Residues 299–370 (VMNGVAGPDS…TLPRSSSMAA (72 aa)) form a disordered region. Over residues 321-335 (QPKSLSPPQSQSKLS) the composition is skewed to low complexity. Thr341 bears the Phosphothreonine mark. Ser347 carries the phosphoserine modification. The span at 349–368 (TPKNSYATTENKTLPRSSSM) shows a compositional bias: polar residues. The residue at position 361 (Thr361) is a Phosphothreonine. 4 positions are modified to phosphoserine: Ser367, Ser385, Ser396, and Ser455. Positions 375 to 438 (NGRMRVKAIF…PFSYTRVLDS (64 aa)) constitute an SH3 domain. The segment at 445-477 (HMSLQQGKSSSTGNLLDKDDLALPPPDYGTSSR) is disordered. Over residues 447 to 458 (SLQQGKSSSTGN) the composition is skewed to polar residues.

As to quaternary structure, homodimer. Interacts with CDC42 and RAC1 that have been activated by GTP binding. Binds DIAPH1. Interacts with ATN1, ADGRB1, SHANK1, SHANK2, SHANK3, TIAM1, WASF1 and WASF2. Interacts with ENAH after recruitment of CDC42. Interacts with EPS8. Post-translationally, phosphorylated on tyrosine residues by INSR in response to insulin treatment. As to expression, detected in liver, brain, olfactory bulb, brain cortex, caudate putamen, hypothalamus and cerebellum.

Its subcellular location is the cytoplasm. The protein resides in the membrane. It is found in the cell projection. The protein localises to the filopodium. It localises to the ruffle. Its subcellular location is the cytoskeleton. Its function is as follows. Adapter protein that links membrane-bound small G-proteins to cytoplasmic effector proteins. Necessary for CDC42-mediated reorganization of the actin cytoskeleton and for RAC1-mediated membrane ruffling. Involved in the regulation of the actin cytoskeleton by WASF family members and the Arp2/3 complex. Plays a role in neurite growth. Acts syngeristically with ENAH to promote filipodia formation. Plays a role in the reorganization of the actin cytoskeleton in response to bacterial infection. Participates in actin bundling when associated with EPS8, promoting filopodial protrusions. The protein is BAR/IMD domain-containing adapter protein 2 (Baiap2) of Mus musculus (Mouse).